The primary structure comprises 452 residues: 1,4-beta-D-glucan cellobiohydrolase A (452 aa).

A signal peptide spans 1-17; it reads MHQRALLFSALLTAVRA. N-linked (GlcNAc...) asparagine glycosylation is present at asparagine 62. The active-site Nucleophile is the glutamate 227. The active-site Proton donor is the glutamate 232. N-linked (GlcNAc...) asparagine glycans are attached at residues asparagine 285, asparagine 335, asparagine 402, and asparagine 445.

Belongs to the glycosyl hydrolase 7 (cellulase C) family.

It is found in the secreted. The catalysed reaction is Hydrolysis of (1-&gt;4)-beta-D-glucosidic linkages in cellulose and cellotetraose, releasing cellobiose from the non-reducing ends of the chains.. In terms of biological role, the biological conversion of cellulose to glucose generally requires three types of hydrolytic enzymes: (1) Endoglucanases which cut internal beta-1,4-glucosidic bonds; (2) Exocellobiohydrolases that cut the disaccharide cellobiose from the non-reducing end of the cellulose polymer chain; (3) Beta-1,4-glucosidases which hydrolyze the cellobiose and other short cello-oligosaccharides to glucose. The chain is 1,4-beta-D-glucan cellobiohydrolase A (cbhA) from Aspergillus niger.